The following is a 498-amino-acid chain: ADP,ATP carrier protein 1 (498 aa).

Topologically, residues 1–33 are cytoplasmic; the sequence is MSTSKSENYLSELRKIIWPIEQHENKKFLPLAF. A helical membrane pass occupies residues 34-54; that stretch reads MMFCILLNYSTLRSIKDGFVV. A disulfide bridge links Cys37 with Cys85. Residues 55–67 are Extracellular-facing; that stretch reads TDIGTESISFLKT. Residues 68–88 form a helical membrane-spanning segment; it reads YIVLPSAVIAMVIYVKLCDIL. Topologically, residues 89–92 are cytoplasmic; it reads KQEN. The chain crosses the membrane as a helical span at residues 93–113; it reads IFYVITSFFLGYFALFAFVLY. Topologically, residues 114-147 are extracellular; sequence PYPDLVHPDHKTIESLSLAYPNFKWFIKIVGKWS. Residues 148 to 168 form a helical membrane-spanning segment; it reads FASFYTIAELWGTMMLSLLFW. At 169–184 the chain is on the cytoplasmic side; the sequence is QFANQITKITEAKRFY. The chain crosses the membrane as a helical span at residues 185–205; that stretch reads SMFGLLANLALPVTSVVIGYF. At 206 to 218 the chain is on the extracellular side; sequence LHEKTQIVSEHLK. A helical membrane pass occupies residues 219 to 239; sequence FIPLFVIMITSSFLIILTYRW. Residues 240-279 are Cytoplasmic-facing; sequence MNKNVLTDPRLYDPTLVKEKKAKAKLSFIESFKMIFTSKY. A helical transmembrane segment spans residues 280–300; sequence VGYIALLIIAYGVSVNLVEGV. Residues 301–320 are Extracellular-facing; the sequence is WKSKVKELYPTKEAYTIYMG. The helical transmembrane segment at 321 to 341 threads the bilayer; sequence QFQFYQGWVAIAFMLIGSNIL. The Cytoplasmic portion of the chain corresponds to 342 to 348; sequence RKVSWLT. The chain crosses the membrane as a helical span at residues 349–369; sequence AAMITPLMMFITGAAFFSFIF. Topologically, residues 370–379 are extracellular; the sequence is FDSVIAMNLT. Residues 380 to 400 form a helical membrane-spanning segment; the sequence is GILASSPLTLAVMFGMIQNVL. Residues 401–438 lie on the Cytoplasmic side of the membrane; the sequence is SKGVKYSLFDATKNMAYIPLDKDLRVKGQAAVEVIGGR. 436–442 provides a ligand contact to ATP; it reads GGRLGKS. A helical membrane pass occupies residues 439–459; that stretch reads LGKSGGAIIQSTFFILFPAFG. Topologically, residues 460-465 are extracellular; it reads FIEATP. A helical transmembrane segment spans residues 466–486; that stretch reads YFASIFFIIVILWIFAVKGLN. Residues 487 to 498 lie on the Cytoplasmic side of the membrane; that stretch reads KEYQVLVNKNEN.

The protein belongs to the ADP/ATP translocase tlc family.

It is found in the cell membrane. Functionally, provides the rickettsial cell with host ATP in exchange for rickettsial ADP. This is an obligate exchange system. This energy acquiring activity is an important component of rickettsial parasitism. In Rickettsia typhi (strain ATCC VR-144 / Wilmington), this protein is ADP,ATP carrier protein 1 (tlcA).